Consider the following 453-residue polypeptide: Probable exopolygalacturonase B (453 aa).

Residues 1–16 (MKFLALAALFASTVSS) form the signal peptide. Residues N185 and N225 are each glycosylated (N-linked (GlcNAc...) asparagine). The active-site Proton donor is D255. Cysteines 257 and 274 form a disulfide. Residues N263 and N275 are each glycosylated (N-linked (GlcNAc...) asparagine). The active site involves H278. PbH1 repeat units follow at residues 295–316 (IENV…RLKA) and 327–348 (INNV…VLDQ). N-linked (GlcNAc...) asparagine glycosylation is found at N302, N329, N354, and N366. The PbH1 3 repeat unit spans residues 362 to 405 (PSRVNFTNIVFENIYGTSSGKHGKVVADLTCSPNAVCSGIRLKN). Residues C392 and C398 are joined by a disulfide bond. N-linked (GlcNAc...) asparagine glycosylation occurs at N436.

Belongs to the glycosyl hydrolase 28 family.

It localises to the secreted. It catalyses the reaction [(1-&gt;4)-alpha-D-galacturonosyl](n) + H2O = alpha-D-galacturonate + [(1-&gt;4)-alpha-D-galacturonosyl](n-1). Functionally, specific in hydrolyzing the terminal glycosidic bond of polygalacturonic acid and oligogalacturonates. In Neosartorya fischeri (strain ATCC 1020 / DSM 3700 / CBS 544.65 / FGSC A1164 / JCM 1740 / NRRL 181 / WB 181) (Aspergillus fischerianus), this protein is Probable exopolygalacturonase B (pgxB).